The primary structure comprises 95 residues: Transcription and mRNA export factor ENY2-2 (95 aa).

The protein belongs to the ENY2 family. Component of the nuclear pore complex (NPC)-associated TREX-2 complex (transcription and export complex 2). Component of the SAGA transcription coactivator-HAT complex. Within the SAGA complex, participates in a subcomplex of SAGA called the DUB module (deubiquitination module).

It is found in the nucleus. The protein resides in the nucleoplasm. Involved in mRNA export coupled transcription activation by association with both the TREX-2 and the SAGA complexes. The transcription regulatory histone acetylation (HAT) complex SAGA is a multiprotein complex that activates transcription by remodeling chromatin and mediating histone acetylation and deubiquitination. Within the SAGA complex, participates in a subcomplex that specifically deubiquitinates histones. The SAGA complex is recruited to specific gene promoters by activators, where it is required for transcription. The TREX-2 complex functions in docking export-competent ribonucleoprotein particles (mRNPs) to the nuclear entrance of the nuclear pore complex (nuclear basket). TREX-2 participates in mRNA export and accurate chromatin positioning in the nucleus by tethering genes to the nuclear periphery. The sequence is that of Transcription and mRNA export factor ENY2-2 (eny2-2) from Salmo salar (Atlantic salmon).